A 235-amino-acid chain; its full sequence is Cytochrome c-554 (235 aa).

An N-terminal signal peptide occupies residues 1–24 (MKIMIACGLVAAALFTLTSGQSLA). Heme contacts are provided by C35, C38, H39, H51, C84, C87, H88, C112, C115, H116, H126, C158, C161, H162, and H203. A disordered region spans residues 121 to 144 (NFRGDHRKSGQAFEKSGKKTPRKD).

Binds 4 heme groups per subunit.

The protein resides in the periplasm. In terms of biological role, involved in ammonia oxidation; accepts electrons directly from hydroxylamine oxidoreductase (HAO). The protein is Cytochrome c-554 (cycA1) of Nitrosomonas europaea (strain ATCC 19718 / CIP 103999 / KCTC 2705 / NBRC 14298).